Consider the following 490-residue polypeptide: Patellin-3 (490 aa).

Positions 1 to 17 (MAEEPTTTTLVTPEKLP) are enriched in low complexity. A disordered region spans residues 1-121 (MAEEPTTTTL…ESSKLSDLSN (121 aa)). Ala-2 is subject to N-acetylalanine. Positions 19–33 (PSLTPSEVSESTQDA) are enriched in polar residues. Positions 46–56 (ETNPPETADTT) are enriched in low complexity. Composition is skewed to basic and acidic residues over residues 57–69 (TKPE…EHHP) and 79–100 (STEK…EKKS). Ser-108 carries the phosphoserine modification. Basic and acidic residues predominate over residues 109–121 (FKEESSKLSDLSN). Residue Lys-193 forms a Glycyl lysine isopeptide (Lys-Gly) (interchain with G-Cter in ubiquitin) linkage. One can recognise a CRAL-TRIO domain in the interval 202-377 (EEDLVDDLDK…QYGGLSVDPC (176 aa)). The 135-residue stretch at 353 to 487 (AETLFKYISP…KKKLVYRFNV (135 aa)) folds into the GOLD domain.

Belongs to the patellin family.

The protein localises to the membrane. The protein resides in the cytoplasm. Functionally, carrier protein that may be involved in membrane-trafficking events associated with cell plate formation during cytokinesis. Binds to some hydrophobic molecules such as phosphoinositides and promotes their transfer between the different cellular sites. This is Patellin-3 (PATL3) from Arabidopsis thaliana (Mouse-ear cress).